The primary structure comprises 546 residues: Chaperonin GroEL (546 aa).

Residues 30-33, lysine 51, 87-91, glycine 415, 479-481, and aspartate 495 contribute to the ATP site; these read TLGP, DGTTT, and NAA.

This sequence belongs to the chaperonin (HSP60) family. Forms a cylinder of 14 subunits composed of two heptameric rings stacked back-to-back. Interacts with the co-chaperonin GroES.

It localises to the cytoplasm. The catalysed reaction is ATP + H2O + a folded polypeptide = ADP + phosphate + an unfolded polypeptide.. Functionally, together with its co-chaperonin GroES, plays an essential role in assisting protein folding. The GroEL-GroES system forms a nano-cage that allows encapsulation of the non-native substrate proteins and provides a physical environment optimized to promote and accelerate protein folding. This chain is Chaperonin GroEL, found in Stutzerimonas stutzeri (strain A1501) (Pseudomonas stutzeri).